Here is a 312-residue protein sequence, read N- to C-terminus: Zinc transporter ZitB (312 aa).

5 helical membrane passes run 21–41 (LLFAFIVTAGFMLLEVVGGIL), 48–68 (LADAGHMLTDAAALLFALLVV), 90–110 (AAFVNAIALVVITLLIVWEAI), 123–143 (LMMVIAVAGLLANLFAFWILH), and 164–184 (LLGSVGAIVAALIIIWTGWTP).

It belongs to the cation diffusion facilitator (CDF) transporter (TC 2.A.4) family. SLC30A subfamily.

It localises to the cell inner membrane. Involved in zinc efflux across the cytoplasmic membrane, thus reducing zinc accumulation in the cytoplasm and rendering bacteria more resistant to zinc. It may contribute to zinc homeostasis at low concentrations of zinc. In Salmonella typhi, this protein is Zinc transporter ZitB.